A 236-amino-acid polypeptide reads, in one-letter code: Purine nucleoside phosphorylase DeoD-type (236 aa).

Residue H4 coordinates a purine D-ribonucleoside. Residues G20, R24, R43, and 87 to 90 contribute to the phosphate site; that span reads RVGT. A purine D-ribonucleoside contacts are provided by residues 179–181 and 203–204; these read EME and SD. D204 acts as the Proton donor in catalysis.

The protein belongs to the PNP/UDP phosphorylase family. As to quaternary structure, homohexamer; trimer of homodimers.

It carries out the reaction a purine D-ribonucleoside + phosphate = a purine nucleobase + alpha-D-ribose 1-phosphate. The enzyme catalyses a purine 2'-deoxy-D-ribonucleoside + phosphate = a purine nucleobase + 2-deoxy-alpha-D-ribose 1-phosphate. In terms of biological role, catalyzes the reversible phosphorolytic breakdown of the N-glycosidic bond in the beta-(deoxy)ribonucleoside molecules, with the formation of the corresponding free purine bases and pentose-1-phosphate. In Streptococcus pneumoniae serotype 2 (strain D39 / NCTC 7466), this protein is Purine nucleoside phosphorylase DeoD-type.